We begin with the raw amino-acid sequence, 371 residues long: MNLKDKNIIITAGGTGGHIYPALAVAEMLRENNANVTWVGTPNSMEANIVPEYFNMQYIKSSGVRGKGLKRKVAFPFTLISSTLKARKILKKLKIDLVIGFGGYVSGPICLAAVQKDIPIIIHEQNAKIGLTNRILAKLATKVCLAFDVEDIQKRLSPKQLAKTQVVGNPIRKDIIALNNKTKNITENGKLKLLVLGGSQGAKSINNIIPDLIIEANKQGISLKVWHQTGKLSFEETKNNYNQVPSTHIKDISAYITDMTNAYEWADILICRAGALTVSESAIAGVPAIFIPLPSAVDDHQFFNAQNMVKNNAGFCIRQDQMTLENLIDIIKPLYEDRDKLKEISQKAKNTLIKDSSEQILKAVEQILNKK.

Residues 15-17 (TGG), Asn-126, Arg-172, Ser-199, Ile-256, 275-280 (ALTVSE), and Gln-301 contribute to the UDP-N-acetyl-alpha-D-glucosamine site.

Belongs to the glycosyltransferase 28 family. MurG subfamily.

It is found in the cell inner membrane. The catalysed reaction is di-trans,octa-cis-undecaprenyl diphospho-N-acetyl-alpha-D-muramoyl-L-alanyl-D-glutamyl-meso-2,6-diaminopimeloyl-D-alanyl-D-alanine + UDP-N-acetyl-alpha-D-glucosamine = di-trans,octa-cis-undecaprenyl diphospho-[N-acetyl-alpha-D-glucosaminyl-(1-&gt;4)]-N-acetyl-alpha-D-muramoyl-L-alanyl-D-glutamyl-meso-2,6-diaminopimeloyl-D-alanyl-D-alanine + UDP + H(+). It participates in cell wall biogenesis; peptidoglycan biosynthesis. In terms of biological role, cell wall formation. Catalyzes the transfer of a GlcNAc subunit on undecaprenyl-pyrophosphoryl-MurNAc-pentapeptide (lipid intermediate I) to form undecaprenyl-pyrophosphoryl-MurNAc-(pentapeptide)GlcNAc (lipid intermediate II). The chain is UDP-N-acetylglucosamine--N-acetylmuramyl-(pentapeptide) pyrophosphoryl-undecaprenol N-acetylglucosamine transferase from Francisella philomiragia subsp. philomiragia (strain ATCC 25017 / CCUG 19701 / FSC 153 / O#319-036).